We begin with the raw amino-acid sequence, 137 residues long: ATP synthase epsilon chain, chloroplastic (137 aa).

The protein belongs to the ATPase epsilon chain family. As to quaternary structure, F-type ATPases have 2 components, CF(1) - the catalytic core - and CF(0) - the membrane proton channel. CF(1) has five subunits: alpha(3), beta(3), gamma(1), delta(1), epsilon(1). CF(0) has three main subunits: a, b and c.

It is found in the plastid. The protein localises to the chloroplast thylakoid membrane. In terms of biological role, produces ATP from ADP in the presence of a proton gradient across the membrane. This is ATP synthase epsilon chain, chloroplastic from Pinus koraiensis (Korean pine).